The primary structure comprises 816 residues: Protein kinase C-binding protein NELL2 (816 aa).

The N-terminal stretch at 1–21 is a signal peptide; it reads MESRVLLRTFCLIFGLGAVWG. 4 N-linked (GlcNAc...) asparagine glycosylation sites follow: N53, N225, N293, and N298. The Laminin G-like domain occupies 64–228; the sequence is PRSIKASTAT…AQCPDLNRTC (165 aa). A VWFC 1 domain is found at 272-331; the sequence is RTCTMKGTTYREFESWIDGCKNCTCLNGTIQCETLICPNPDCPLKSALAYVDGKCCKECK. The EGF-like 1 domain occupies 397–439; that stretch reads GYDFCSERHNCMENSICRNLNDRAVCSCRDGFRALREDNAYCE. 3 disulfides stabilise this stretch: C401-C413, C407-C422, and C424-C438. Ca(2+) contacts are provided by D440, I441, and E443. The EGF-like 2; calcium-binding domain maps to 440–481; it reads DIDECAEGRHYCRENTMCVNTPGSFMCICKTGYIRIDDYSCT. Disulfide bonds link C444/C457, C451/C466, C468/C480, C486/C499, C493/C508, C510/C521, C525/C535, C529/C541, and C543/C552. Ca(2+)-binding residues include N459, T460, and S463. The 41-residue stretch at 482 to 522 folds into the EGF-like 3; calcium-binding domain; sequence EHDECITNQHNCDENALCFNTVGGHNCVCKPGYTGNGTTCK. N-linked (GlcNAc...) asparagine glycosylation occurs at N517. The EGF-like 4 domain occupies 523–553; that stretch reads AFCKDGCRNGGACIAANVCACPQGFTGPSCE. O-linked (GlcNAc...) threonine glycosylation occurs at T548. Ca(2+) is bound by residues D555, I556, and E558. One can recognise an EGF-like 5; calcium-binding domain in the interval 555–601; the sequence is DIDECSDGFVQCDSRANCINLPGWYHCECRDGYHDNGMFSPSGESCE. 3 cysteine pairs are disulfide-bonded: C559–C572, C566–C581, and C583–C600. N574, L575, and W578 together coordinate Ca(2+). Ca(2+) contacts are provided by D602, I603, and E605. Residues 602–637 form the EGF-like 6; calcium-binding domain; the sequence is DIDECGTGRHSCANDTICFNLDGGYDCRCPHGKNCT. Intrachain disulfides connect C606–C619, C613–C628, and C630–C636. An N-linked (GlcNAc...) asparagine glycan is attached at N615. Ca(2+) is bound by residues N621, L622, and G625. N-linked (GlcNAc...) asparagine glycosylation occurs at N635. VWFC domains are found at residues 638 to 693 and 698 to 756; these read GDCI…PECD and SQCL…PRCV.

As to quaternary structure, homotrimer. Binds to PRKCB. Interacts with NICOL1; this interaction triggers epididymal differentiation. Interacts (via the EGF domains) with ROBO3 (via Fibronectin type-III 1 domain) with a 3:3 stoichiometry; this interaction promotes oligomerization of ROBO3 resulting in the repulsion of commissural axons in the midline.

It is found in the secreted. Functionally, plays multiple roles in neural tissues, regulates neuronal proliferation, survival, differentiation, polarization, as well as axon guidance and synaptic functions. Plays an important role in axon development during neuronal differentiation through the MAPK intracellular signaling pathway. Via binding to its receptor ROBO3, plays a role in axon guidance, functioning as a repulsive axon guidance cue that contributes to commissural axon guidance to the midline. Required for neuron survival through the modulation of MAPK signaling pathways too. Involved in the regulation of hypothalamic GNRH secretion and the control of puberty. In terms of biological role, epididymal-secreted protein that signals through a ROS1-pathway to regulate the epididymal initial segment (IS) maturation, sperm maturation and male fertility. The sequence is that of Protein kinase C-binding protein NELL2 from Homo sapiens (Human).